The sequence spans 2339 residues: DNA-directed RNA polymerase III subunit RPC1 (2339 aa).

Residues C88, C91, C98, H101, C128, C131, and C175 each contribute to the Zn(2+) site. Mg(2+)-binding residues include D611, D613, and D615. Residues 955–967 (PTEFFFHTMSGRE) form a bridging helix region. 2 disordered regions span residues 1503-1557 (EKRK…NNYY) and 2038-2079 (LKSE…DSDR). Residues 1509–1520 (PKEEKENFDRNN) show a composition bias toward basic and acidic residues. The segment covering 1521–1557 (YKMITDNNNNDNNNNNNDNNNNDNNNNNNNSNNNNYY) has biased composition (low complexity). The segment covering 2038–2047 (LKSEKKKDIN) has biased composition (basic and acidic residues). Positions 2049–2059 (DNNNNDDNNNN) are enriched in low complexity.

It belongs to the RNA polymerase beta' chain family. In terms of assembly, component of the RNA polymerase III (Pol III) complex consisting of 17 subunits.

Its subcellular location is the nucleus. It carries out the reaction RNA(n) + a ribonucleoside 5'-triphosphate = RNA(n+1) + diphosphate. Functionally, DNA-dependent RNA polymerase catalyzes the transcription of DNA into RNA using the four ribonucleoside triphosphates as substrates. Largest and catalytic core component of RNA polymerase III which synthesizes small RNAs, such as 5S rRNA and tRNAs. Forms the polymerase active center together with the second largest subunit. A single-stranded DNA template strand of the promoter is positioned within the central active site cleft of Pol III. A bridging helix emanates from RPC1 and crosses the cleft near the catalytic site and is thought to promote translocation of Pol III by acting as a ratchet that moves the RNA-DNA hybrid through the active site by switching from straight to bent conformations at each step of nucleotide addition. The polypeptide is DNA-directed RNA polymerase III subunit RPC1 (Plasmodium falciparum).